The primary structure comprises 200 residues: Large ribosomal subunit protein bL25 (200 aa).

This sequence belongs to the bacterial ribosomal protein bL25 family. CTC subfamily. Part of the 50S ribosomal subunit; part of the 5S rRNA/L5/L18/L25 subcomplex. Contacts the 5S rRNA. Binds to the 5S rRNA independently of L5 and L18.

Its function is as follows. This is one of the proteins that binds to the 5S RNA in the ribosome where it forms part of the central protuberance. This chain is Large ribosomal subunit protein bL25, found in Pseudomonas fluorescens (strain SBW25).